The sequence spans 38 residues: Photosystem II reaction center protein X (38 aa).

Residues 9-29 (IASLFAGAFIALAIGGVLVFI) traverse the membrane as a helical segment.

This sequence belongs to the PsbX family. Type 1 subfamily. PSII is composed of 1 copy each of membrane proteins PsbA, PsbB, PsbC, PsbD, PsbE, PsbF, PsbH, PsbI, PsbJ, PsbK, PsbL, PsbM, PsbT, PsbX, PsbY, PsbZ, Psb30/Ycf12, at least 3 peripheral proteins of the oxygen-evolving complex and a large number of cofactors. It forms dimeric complexes.

The protein localises to the plastid. The protein resides in the chloroplast thylakoid membrane. Functionally, involved in the binding and/or turnover of quinones at the Q(B) site of photosystem II (PSII). PSII is a light-driven water plastoquinone oxidoreductase, using light energy to abstract electrons from H(2)O, generating a proton gradient subsequently used for ATP formation. The sequence is that of Photosystem II reaction center protein X from Phaeodactylum tricornutum (strain CCAP 1055/1).